A 221-amino-acid chain; its full sequence is Ribosomal RNA large subunit methyltransferase E (221 aa).

S-adenosyl-L-methionine-binding residues include glycine 60, tryptophan 62, aspartate 89, aspartate 105, and aspartate 134. Lysine 174 serves as the catalytic Proton acceptor.

Belongs to the class I-like SAM-binding methyltransferase superfamily. RNA methyltransferase RlmE family.

The protein resides in the cytoplasm. The enzyme catalyses uridine(2552) in 23S rRNA + S-adenosyl-L-methionine = 2'-O-methyluridine(2552) in 23S rRNA + S-adenosyl-L-homocysteine + H(+). Specifically methylates the uridine in position 2552 of 23S rRNA at the 2'-O position of the ribose in the fully assembled 50S ribosomal subunit. This is Ribosomal RNA large subunit methyltransferase E from Cupriavidus necator (strain ATCC 17699 / DSM 428 / KCTC 22496 / NCIMB 10442 / H16 / Stanier 337) (Ralstonia eutropha).